A 378-amino-acid polypeptide reads, in one-letter code: tRNA (guanine(26)-N(2))-dimethyltransferase (378 aa).

The Trm1 methyltransferase domain maps to 4–374; that stretch reads KEVTEGKVRI…KEYEEITKCI (371 aa). Arg44, Arg69, Asp87, Asp114, and Ala115 together coordinate S-adenosyl-L-methionine. Positions 246, 249, 263, and 266 each coordinate Zn(2+).

The protein belongs to the class I-like SAM-binding methyltransferase superfamily. Trm1 family.

The enzyme catalyses guanosine(26) in tRNA + 2 S-adenosyl-L-methionine = N(2)-dimethylguanosine(26) in tRNA + 2 S-adenosyl-L-homocysteine + 2 H(+). Dimethylates a single guanine residue at position 26 of a number of tRNAs using S-adenosyl-L-methionine as donor of the methyl groups. This Saccharolobus solfataricus (strain ATCC 35092 / DSM 1617 / JCM 11322 / P2) (Sulfolobus solfataricus) protein is tRNA (guanine(26)-N(2))-dimethyltransferase.